The sequence spans 484 residues: Cysteine--tRNA ligase (484 aa).

C29 provides a ligand contact to Zn(2+). Residues 31–41 carry the 'HIGH' region motif; the sequence is PTVQSAPHIGH. Zn(2+)-binding residues include C219, H244, and E248. Residues 275–279 carry the 'KMSKS' region motif; the sequence is KMSKS. K278 contacts ATP.

The protein belongs to the class-I aminoacyl-tRNA synthetase family. In terms of assembly, monomer. It depends on Zn(2+) as a cofactor.

Its subcellular location is the cytoplasm. The catalysed reaction is tRNA(Cys) + L-cysteine + ATP = L-cysteinyl-tRNA(Cys) + AMP + diphosphate. The sequence is that of Cysteine--tRNA ligase from Clavibacter michiganensis subsp. michiganensis (strain NCPPB 382).